The chain runs to 362 residues: D-alanine--D-alanine ligase (362 aa).

An ATP-grasp domain is found at 134 to 345 (KILAQRAGVP…YPDLITRLIR (212 aa)). Residue 170-225 (GQLGTSNLFVKPSNQGSSVGITHVTDDSNYAEALAEAFKYDDKVLVEEGIVGTEVE) participates in ATP binding. Mg(2+)-binding residues include D298, E312, and N314.

Belongs to the D-alanine--D-alanine ligase family. Mg(2+) serves as cofactor. Requires Mn(2+) as cofactor.

The protein resides in the cytoplasm. The enzyme catalyses 2 D-alanine + ATP = D-alanyl-D-alanine + ADP + phosphate + H(+). Its pathway is cell wall biogenesis; peptidoglycan biosynthesis. Functionally, cell wall formation. This Lactobacillus delbrueckii subsp. bulgaricus (strain ATCC 11842 / DSM 20081 / BCRC 10696 / JCM 1002 / NBRC 13953 / NCIMB 11778 / NCTC 12712 / WDCM 00102 / Lb 14) protein is D-alanine--D-alanine ligase.